The sequence spans 335 residues: Biotin synthase (335 aa).

The 227-residue stretch at 43–269 (YFGKKVKLNM…INPTKEIRIA (227 aa)) folds into the Radical SAM core domain. Cysteine 61, cysteine 65, and cysteine 68 together coordinate [4Fe-4S] cluster. Cysteine 104, cysteine 137, cysteine 197, and arginine 267 together coordinate [2Fe-2S] cluster.

It belongs to the radical SAM superfamily. Biotin synthase family. Homodimer. It depends on [4Fe-4S] cluster as a cofactor. [2Fe-2S] cluster is required as a cofactor.

The enzyme catalyses (4R,5S)-dethiobiotin + (sulfur carrier)-SH + 2 reduced [2Fe-2S]-[ferredoxin] + 2 S-adenosyl-L-methionine = (sulfur carrier)-H + biotin + 2 5'-deoxyadenosine + 2 L-methionine + 2 oxidized [2Fe-2S]-[ferredoxin]. It functions in the pathway cofactor biosynthesis; biotin biosynthesis; biotin from 7,8-diaminononanoate: step 2/2. Catalyzes the conversion of dethiobiotin (DTB) to biotin by the insertion of a sulfur atom into dethiobiotin via a radical-based mechanism. In Staphylococcus aureus (strain MSSA476), this protein is Biotin synthase.